Here is a 289-residue protein sequence, read N- to C-terminus: tRNA pseudouridine synthase B (289 aa).

Catalysis depends on D38, which acts as the Nucleophile.

This sequence belongs to the pseudouridine synthase TruB family. Type 1 subfamily.

The enzyme catalyses uridine(55) in tRNA = pseudouridine(55) in tRNA. Responsible for synthesis of pseudouridine from uracil-55 in the psi GC loop of transfer RNAs. This Acaryochloris marina (strain MBIC 11017) protein is tRNA pseudouridine synthase B.